Here is a 282-residue protein sequence, read N- to C-terminus: MKITNYEIYKLKKSGLTNQQILKVLEYGENVDQELLLGDIADISGCRNPAVFMERYFQIDDAHLSKEFQKFPSFSILDDCYPWDLSEIYDAPVLLFYKGNLDLLKFPKVAVVGSRACSKQGAKSVEKVIQGLENELVIVSGLAKGIDTAAHMAALQNGGKTIAVIGTGLDVFYPKANKRLQDYIGNDHLVLSEYGPGEQPLKFHFPARNRIIAGLCRGVIVAEAKMRSGSLITCERAMEEGRDVFAIPGSILDGLSDGCHHLIQEGAKLVTSGQDVLAEFEF.

The protein belongs to the DprA/Smf family. In terms of assembly, homodimer; forms tail-to-tail dimers, forms nucleoprotein complex (NPC) which requires at least 30 nucleotides (nt) of ssDNA becoming optimal with 50 nt. Interacts with RecA, forms mixed DprA-RecA-ssDNA filaments. Interacts with ComFA and ComFC.

It localises to the cytoplasm. Protein that helps load RecA onto ssDNA during transformation. Required for DNA transformation. Not required for DNA uptake but for a later stage of transformation. Thought to interact at the cell pole with newly imported transforming ssDNA which it binds cooperatively, protecting linear and circular ssDNA from nuclease action. Forms bridges between DNA segments. Favors the loading of RecA onto ssDNA and formation of RecA-DNA filaments, triggering RecA-catalysis of ATP-driven homologous DNA pairing. In Streptococcus pneumoniae (strain ATCC BAA-255 / R6), this protein is DNA processing protein DprA.